Consider the following 668-residue polypeptide: ATP-dependent RNA helicase MSS116, mitochondrial (668 aa).

The N-terminal 38 residues, 1-38 (MLKQLSRSLGIRSSPIVANLIRSKQVCTRGFHISLVKQ), are a transit peptide targeting the mitochondrion. The Q motif motif lies at 87-115 (DFKGKGYIHDSIINSLHKNDFKELTPIQQ). One can recognise a Helicase ATP-binding domain in the interval 119–300 (VPIFNTEKGL…KKHIHPEYEF (182 aa)). 132 to 139 (AKTGTGKT) provides a ligand contact to ATP. The short motif at 242 to 245 (DEAD) is the DEAD box element. The Helicase C-terminal domain occupies 332-501 (SLSELHGIMK…NIIDQIESPL (170 aa)). Residues 585-668 (YSDFSRSGMS…EHRRIRDHDE (84 aa)) are disordered. The span at 586 to 597 (SDFSRSGMSQRP) shows a compositional bias: polar residues. Positions 609-636 (NGRGKYGNNRNNDWSYQNKNRYNNNNNR) are enriched in low complexity. The segment covering 637–668 (QTERSYDSDRKSHNDWKYEKKFEHRRIRDHDE) has biased composition (basic and acidic residues).

The protein belongs to the DEAD box helicase family. DDX18/HAS1 subfamily.

It localises to the mitochondrion matrix. It catalyses the reaction ATP + H2O = ADP + phosphate + H(+). ATP-dependent RNA helicase required for mitochondrial splicing of group I and II introns. Also required for efficient mitochondrial translation. The protein is ATP-dependent RNA helicase MSS116, mitochondrial (MSS116) of Candida albicans (strain SC5314 / ATCC MYA-2876) (Yeast).